Consider the following 149-residue polypeptide: Ribonuclease HI (149 aa).

One can recognise an RNase H type-1 domain in the interval 1–142 (MTPKVTIYTD…ADALANEGLR (142 aa)). Residues aspartate 10, glutamate 48, aspartate 70, and aspartate 134 each contribute to the Mg(2+) site.

The protein belongs to the RNase H family. As to quaternary structure, monomer. It depends on Mg(2+) as a cofactor.

The protein localises to the cytoplasm. It catalyses the reaction Endonucleolytic cleavage to 5'-phosphomonoester.. Functionally, endonuclease that specifically degrades the RNA of RNA-DNA hybrids. This Caulobacter vibrioides (strain ATCC 19089 / CIP 103742 / CB 15) (Caulobacter crescentus) protein is Ribonuclease HI.